Reading from the N-terminus, the 239-residue chain is Probable 2-phosphosulfolactate phosphatase (239 aa).

It belongs to the ComB family. It depends on Mg(2+) as a cofactor.

It carries out the reaction (2R)-O-phospho-3-sulfolactate + H2O = (2R)-3-sulfolactate + phosphate. In Clostridium botulinum (strain Okra / Type B1), this protein is Probable 2-phosphosulfolactate phosphatase.